The sequence spans 173 residues: Small ribosomal subunit protein uS5 (173 aa).

Residues 17–80 (WQERVIQIRR…ADGKKQLIDV (64 aa)) enclose the S5 DRBM domain.

It belongs to the universal ribosomal protein uS5 family. Part of the 30S ribosomal subunit. Contacts proteins S4 and S8.

With S4 and S12 plays an important role in translational accuracy. In terms of biological role, located at the back of the 30S subunit body where it stabilizes the conformation of the head with respect to the body. The sequence is that of Small ribosomal subunit protein uS5 from Rippkaea orientalis (strain PCC 8801 / RF-1) (Cyanothece sp. (strain PCC 8801)).